The chain runs to 322 residues: UDP-galactose transporter homolog 1 (322 aa).

Transmembrane regions (helical) follow at residues 4–24 (FMRQ…SWAV), 43–63 (ALLS…WNWF), 76–96 (FLGY…FGYA), 105–125 (TVIL…VFVY), and 129–149 (FPPH…IFSY). The N-linked (GlcNAc...) asparagine glycan is linked to Asn-152. The next 4 membrane-spanning stretches (helical) occupy residues 164-184 (SPIG…TNTT), 199-219 (MMIA…ISPF), 250-270 (LFIF…ITLT), and 290-310 (IQWL…GLKI). N-linked (GlcNAc...) asparagine glycosylation is found at Asn-313 and Asn-314.

This sequence belongs to the nucleotide-sugar transporter family. SLC35B subfamily.

Its subcellular location is the endoplasmic reticulum membrane. May be involved in specific transport of UDP-Gal from the cytosol to the Golgi lumen. Involved in the maintenance of optimal conditions for the folding of secretory pathway proteins in the endoplasmic reticulum. This chain is UDP-galactose transporter homolog 1 (hut1), found in Schizosaccharomyces pombe (strain 972 / ATCC 24843) (Fission yeast).